We begin with the raw amino-acid sequence, 411 residues long: Methylthioribose-1-phosphate isomerase (411 aa).

Asp-284 acts as the Proton donor in catalysis.

Belongs to the eIF-2B alpha/beta/delta subunits family. MtnA subfamily.

The protein localises to the cytoplasm. The protein resides in the nucleus. The catalysed reaction is 5-(methylsulfanyl)-alpha-D-ribose 1-phosphate = 5-(methylsulfanyl)-D-ribulose 1-phosphate. The protein operates within amino-acid biosynthesis; L-methionine biosynthesis via salvage pathway; L-methionine from S-methyl-5-thio-alpha-D-ribose 1-phosphate: step 1/6. Its function is as follows. Catalyzes the interconversion of methylthioribose-1-phosphate (MTR-1-P) into methylthioribulose-1-phosphate (MTRu-1-P). This is Methylthioribose-1-phosphate isomerase from Komagataella phaffii (strain GS115 / ATCC 20864) (Yeast).